Reading from the N-terminus, the 226-residue chain is Lipoprotein-releasing system ATP-binding protein LolD 1 (226 aa).

The ABC transporter domain occupies 5-225 (LKLDGIRKSY…IVRVVDGKIA (221 aa)). Residue 42–49 (GPSGSGKS) coordinates ATP.

This sequence belongs to the ABC transporter superfamily. Lipoprotein translocase (TC 3.A.1.125) family. The complex is composed of two ATP-binding proteins (LolD) and two transmembrane proteins (LolC and LolE).

It localises to the cell inner membrane. Its function is as follows. Part of the ABC transporter complex LolCDE involved in the translocation of mature outer membrane-directed lipoproteins, from the inner membrane to the periplasmic chaperone, LolA. Responsible for the formation of the LolA-lipoprotein complex in an ATP-dependent manner. This Rhodopseudomonas palustris (strain ATCC BAA-98 / CGA009) protein is Lipoprotein-releasing system ATP-binding protein LolD 1.